The sequence spans 702 residues: MASAAPASRGAARASTAARDAPFAAAARGPGRFRRDGNGRNRLVAVRAPRRWTTRAAATSGDANVVIKPKKERAKVDPNAVLQVPPSQIRNFSIIAHIDHGKSTLADTLLSKTKTVAARDMEAQLLDSMDIERERGITIKLNSARMNYVANDGETYVLNLIDTPGHVDFSYEVSRSLAACEGALLVVDASQGVEAQTVANVYLALENDLEIITVLNKIDLPGAEPERVKVRSIHWFPYDRVGVREIEDVLGLDTEDAVVASAKANIGMEDILENIVKMIPPPPDTGDEPLRALIFDSYFDPYRGVVVIFRVVDGNLGVGDAVKFMNTGKSYTIDEIGIMRPQKVPVNRLSAGEVGYMIANIKSVADARVGDTITTTKDSSTEPLPGYSEATPMVYCGLFPTDSDQYEDLRVALGKLQINDAALRYEPEQSSAMGFGFRCGFLGLLHMEIVQERLEREYDLGLITTAPSVVYKVYTSDGACVDIANPADLPDASVRDRIEEPFVKLEMFAPSDYVGSLMELAQQRRGEFIDMTYLSESRTCLKYDIPLGEVVTDFFDELKSRSKGYASMEYSFNEYRKSDLVRLDVLINYEPADPLACICHRDKSYVMGRGLVDKLKELIPRQMFRIPIQASIGTKVIASTSISAMRKDVLAKCYGGDISRKKKLLKKQAAGKKRMKQFGKVEVPQEAFMAVLKVDQNAGSGG.

Residues 1–30 show a composition bias toward low complexity; it reads MASAAPASRGAARASTAARDAPFAAAARGP. A disordered region spans residues 1-41; it reads MASAAPASRGAARASTAARDAPFAAAARGPGRFRRDGNGRN. Positions 87–283 constitute a tr-type G domain; it reads SQIRNFSIIA…NIVKMIPPPP (197 aa). GTP contacts are provided by residues 96 to 103, 162 to 166, and 216 to 219; these read AHIDHGKS, DTPGH, and NKID.

This sequence belongs to the TRAFAC class translation factor GTPase superfamily. Classic translation factor GTPase family. LepA subfamily.

The protein resides in the plastid. It is found in the chloroplast. It carries out the reaction GTP + H2O = GDP + phosphate + H(+). In terms of biological role, promotes chloroplast protein synthesis. May act as a fidelity factor of the translation reaction, by catalyzing a one-codon backward translocation of tRNAs on improperly translocated ribosomes. This Micromonas pusilla (strain CCMP1545) (Picoplanktonic green alga) protein is Translation factor GUF1 homolog, chloroplastic.